Here is a 357-residue protein sequence, read N- to C-terminus: NAD kinase 1 (357 aa).

The active-site Proton acceptor is Asp-68. NAD(+)-binding positions include 68–69 (DG), Arg-73, 175–176 (ND), Arg-186, Asp-205, Ala-240, and Gln-275.

This sequence belongs to the NAD kinase family. Requires a divalent metal cation as cofactor.

The protein localises to the cytoplasm. The catalysed reaction is NAD(+) + ATP = ADP + NADP(+) + H(+). Functionally, involved in the regulation of the intracellular balance of NAD and NADP, and is a key enzyme in the biosynthesis of NADP. Catalyzes specifically the phosphorylation on 2'-hydroxyl of the adenosine moiety of NAD to yield NADP. This Streptomyces avermitilis (strain ATCC 31267 / DSM 46492 / JCM 5070 / NBRC 14893 / NCIMB 12804 / NRRL 8165 / MA-4680) protein is NAD kinase 1.